The sequence spans 830 residues: Leucine--tRNA ligase (830 aa).

Positions Pro-34–His-44 match the 'HIGH' region motif. A 'KMSKS' region motif is present at residues Lys-592–Ser-596. Lys-595 provides a ligand contact to ATP.

It belongs to the class-I aminoacyl-tRNA synthetase family.

It localises to the cytoplasm. The enzyme catalyses tRNA(Leu) + L-leucine + ATP = L-leucyl-tRNA(Leu) + AMP + diphosphate. This chain is Leucine--tRNA ligase, found in Ehrlichia ruminantium (strain Gardel).